We begin with the raw amino-acid sequence, 474 residues long: Bifunctional protein HldE (474 aa).

Positions 1–318 (MKLSMPRFDQ…RAIQREEGSE (318 aa)) are ribokinase. Residue 194-197 (NLSE) participates in ATP binding. Asp-263 is an active-site residue. A cytidylyltransferase region spans residues 343 to 474 (FTNGCFDILH…AIVEKIRKSE (132 aa)).

This sequence in the N-terminal section; belongs to the carbohydrate kinase PfkB family. It in the C-terminal section; belongs to the cytidylyltransferase family. Homodimer.

The catalysed reaction is D-glycero-beta-D-manno-heptose 7-phosphate + ATP = D-glycero-beta-D-manno-heptose 1,7-bisphosphate + ADP + H(+). It carries out the reaction D-glycero-beta-D-manno-heptose 1-phosphate + ATP + H(+) = ADP-D-glycero-beta-D-manno-heptose + diphosphate. It functions in the pathway nucleotide-sugar biosynthesis; ADP-L-glycero-beta-D-manno-heptose biosynthesis; ADP-L-glycero-beta-D-manno-heptose from D-glycero-beta-D-manno-heptose 7-phosphate: step 1/4. It participates in nucleotide-sugar biosynthesis; ADP-L-glycero-beta-D-manno-heptose biosynthesis; ADP-L-glycero-beta-D-manno-heptose from D-glycero-beta-D-manno-heptose 7-phosphate: step 3/4. In terms of biological role, catalyzes the phosphorylation of D-glycero-D-manno-heptose 7-phosphate at the C-1 position to selectively form D-glycero-beta-D-manno-heptose-1,7-bisphosphate. Catalyzes the ADP transfer from ATP to D-glycero-beta-D-manno-heptose 1-phosphate, yielding ADP-D-glycero-beta-D-manno-heptose. The protein is Bifunctional protein HldE of Pseudomonas fluorescens (strain Pf0-1).